The sequence spans 729 residues: Dipeptidyl peptidase 3 (729 aa).

His459 contacts Zn(2+). Glu460 is an active-site residue. His464 and Glu517 together coordinate Zn(2+).

This sequence belongs to the peptidase M49 family. Zn(2+) is required as a cofactor.

It localises to the cytoplasm. It carries out the reaction Release of an N-terminal dipeptide from a peptide comprising four or more residues, with broad specificity. Also acts on dipeptidyl 2-naphthylamides.. This is Dipeptidyl peptidase 3 (dpp3) from Nematostella vectensis (Starlet sea anemone).